Reading from the N-terminus, the 99-residue chain is (4S)-4-hydroxy-5-phosphonooxypentane-2,3-dione isomerase (99 aa).

The 90-residue stretch at His-2–Phe-91 folds into the ABM domain.

Belongs to the LsrG family. As to quaternary structure, homodimer.

It localises to the cytoplasm. It carries out the reaction (2S)-2-hydroxy-3,4-dioxopentyl phosphate = 3-hydroxy-2,4-dioxopentyl phosphate. Functionally, involved in the degradation of phospho-AI-2, thereby terminating induction of the lsr operon and closing the AI-2 signaling cycle. Catalyzes the conversion of (4S)-4-hydroxy-5-phosphonooxypentane-2,3-dione (P-DPD) to 3-hydroxy-5-phosphonooxypentane-2,4-dione (P-HPD). The sequence is that of (4S)-4-hydroxy-5-phosphonooxypentane-2,3-dione isomerase from Photorhabdus laumondii subsp. laumondii (strain DSM 15139 / CIP 105565 / TT01) (Photorhabdus luminescens subsp. laumondii).